Here is a 101-residue protein sequence, read N- to C-terminus: MSSSQLEQAITDLINLFHKYSGSDDTIEKEDLLRLMKDNFPNFLGACEKRGRDYLSNIFEKQDKNKDRKIDFSEFLSLLADIATDYHNHSHGAQLCSGGNQ.

Position 2 is an N-acetylserine (Ser2). EF-hand domains lie at 8-42 (QAIT…NFPN) and 50-85 (RGRD…IATD). Zn(2+) contacts are provided by His18 and Asp25. Ca(2+) contacts are provided by Asp63, Asn65, Asp67, Lys69, and Glu74. Positions 87 and 91 each coordinate Zn(2+).

This sequence belongs to the S-100 family. As to quaternary structure, interacts with RANBP9.

The protein localises to the cytoplasm. It is found in the secreted. This is Protein S100-A7 (S100A7) from Bos taurus (Bovine).